We begin with the raw amino-acid sequence, 278 residues long: Putative ABC transporter ATP-binding protein MTBMA_c05830 (278 aa).

In terms of domain architecture, ABC transporter spans 4 to 239 (IEAVNIRYTY…IDTIRGADLR (236 aa)). 37 to 44 (GPNGAGKS) lines the ATP pocket.

This sequence belongs to the ABC transporter superfamily.

It localises to the cell membrane. Probably part of an ABC transporter complex. Responsible for energy coupling to the transport system. This Methanothermobacter marburgensis (strain ATCC BAA-927 / DSM 2133 / JCM 14651 / NBRC 100331 / OCM 82 / Marburg) (Methanobacterium thermoautotrophicum) protein is Putative ABC transporter ATP-binding protein MTBMA_c05830.